A 156-amino-acid chain; its full sequence is 17 kDa lipoprotein (156 aa).

The signal sequence occupies residues 1 to 21; the sequence is MKGSVRALCAFLGVGALGSAL. Residue Cys22 is the site of N-palmitoyl cysteine attachment. Cys22 carries S-diacylglycerol cysteine lipidation.

The protein resides in the cell membrane. In Treponema pallidum (strain Nichols), this protein is 17 kDa lipoprotein (tpp17).